The following is a 234-amino-acid chain: Riboflavin kinase (234 aa).

The interval 1 to 98 (MAESTTAVGH…QEIFGDNSSV (98 aa)) is H-T-H motif-like. The riboflavin kinase stretch occupies residues 99 to 234 (VELTGTVTSG…RITVQLKPKE (136 aa)). Position 108-113 (108-113 (GMGEGR)) interacts with CDP. Positions 137 and 139 each coordinate Mg(2+). FMN is bound by residues threonine 199 and glutamate 207. CDP is bound at residue 212–215 (ERLR).

Belongs to the archaeal riboflavin kinase family. It depends on Mg(2+) as a cofactor.

It catalyses the reaction riboflavin + CTP = CDP + FMN + H(+). Its pathway is cofactor biosynthesis; FMN biosynthesis; FMN from riboflavin (CTP route): step 1/1. In terms of biological role, catalyzes the CTP-dependent phosphorylation of riboflavin (vitamin B2) to form flavin mononucleotide (FMN). The sequence is that of Riboflavin kinase (ribK) from Haloquadratum walsbyi (strain DSM 16790 / HBSQ001).